The sequence spans 267 residues: Tryptophan synthase alpha chain (267 aa).

Catalysis depends on proton acceptor residues Glu-49 and Asp-60.

It belongs to the TrpA family. As to quaternary structure, tetramer of two alpha and two beta chains.

The enzyme catalyses (1S,2R)-1-C-(indol-3-yl)glycerol 3-phosphate + L-serine = D-glyceraldehyde 3-phosphate + L-tryptophan + H2O. The protein operates within amino-acid biosynthesis; L-tryptophan biosynthesis; L-tryptophan from chorismate: step 5/5. In terms of biological role, the alpha subunit is responsible for the aldol cleavage of indoleglycerol phosphate to indole and glyceraldehyde 3-phosphate. The polypeptide is Tryptophan synthase alpha chain (Rippkaea orientalis (strain PCC 8801 / RF-1) (Cyanothece sp. (strain PCC 8801))).